We begin with the raw amino-acid sequence, 197 residues long: Elongation factor Ts (197 aa).

The interval 81-84 (TDFV) is involved in Mg(2+) ion dislocation from EF-Tu.

It belongs to the EF-Ts family.

It localises to the cytoplasm. Associates with the EF-Tu.GDP complex and induces the exchange of GDP to GTP. It remains bound to the aminoacyl-tRNA.EF-Tu.GTP complex up to the GTP hydrolysis stage on the ribosome. The polypeptide is Elongation factor Ts (Coprothermobacter proteolyticus (strain ATCC 35245 / DSM 5265 / OCM 4 / BT)).